A 193-amino-acid chain; its full sequence is Leucyl/phenylalanyl-tRNA--protein transferase (193 aa).

It belongs to the L/F-transferase family.

The protein localises to the cytoplasm. It catalyses the reaction N-terminal L-lysyl-[protein] + L-leucyl-tRNA(Leu) = N-terminal L-leucyl-L-lysyl-[protein] + tRNA(Leu) + H(+). The catalysed reaction is N-terminal L-arginyl-[protein] + L-leucyl-tRNA(Leu) = N-terminal L-leucyl-L-arginyl-[protein] + tRNA(Leu) + H(+). The enzyme catalyses L-phenylalanyl-tRNA(Phe) + an N-terminal L-alpha-aminoacyl-[protein] = an N-terminal L-phenylalanyl-L-alpha-aminoacyl-[protein] + tRNA(Phe). In terms of biological role, functions in the N-end rule pathway of protein degradation where it conjugates Leu, Phe and, less efficiently, Met from aminoacyl-tRNAs to the N-termini of proteins containing an N-terminal arginine or lysine. The sequence is that of Leucyl/phenylalanyl-tRNA--protein transferase from Gloeobacter violaceus (strain ATCC 29082 / PCC 7421).